The primary structure comprises 581 residues: Arginine--tRNA ligase (581 aa).

The 'HIGH' region signature appears at 131–141 (ANPTGPLHVGH).

The protein belongs to the class-I aminoacyl-tRNA synthetase family. Monomer.

The protein localises to the cytoplasm. It carries out the reaction tRNA(Arg) + L-arginine + ATP = L-arginyl-tRNA(Arg) + AMP + diphosphate. The protein is Arginine--tRNA ligase of Ruegeria pomeroyi (strain ATCC 700808 / DSM 15171 / DSS-3) (Silicibacter pomeroyi).